A 449-amino-acid chain; its full sequence is L10-interacting MYB domain-containing protein (449 aa).

Residues 162–225 enclose the Myb-like domain; the sequence is SNPQTKGYWS…YTRPQLKNHW (64 aa). The tract at residues 297-324 is disordered; the sequence is TYTPPSRSRKKLLHNRSESPQWRDTTPL. The span at 314–324 shows a compositional bias: polar residues; it reads ESPQWRDTTPL.

As to quaternary structure, interacts with RPL10A. Expressed in seedlings, leaves, roots, stems and flowers.

Its subcellular location is the nucleus. In terms of biological role, transcriptional repressor that associates with ribosomal protein promoters. The chain is L10-interacting MYB domain-containing protein from Arabidopsis thaliana (Mouse-ear cress).